The primary structure comprises 159 residues: Small ribosomal subunit protein uS7 (159 aa).

It belongs to the universal ribosomal protein uS7 family. As to quaternary structure, part of the 30S ribosomal subunit. Contacts proteins S9 and S11.

Functionally, one of the primary rRNA binding proteins, it binds directly to 16S rRNA where it nucleates assembly of the head domain of the 30S subunit. Is located at the subunit interface close to the decoding center, probably blocks exit of the E-site tRNA. This is Small ribosomal subunit protein uS7 from Wolbachia pipientis wMel.